Here is a 362-residue protein sequence, read N- to C-terminus: MKPLLHAFAPGVMALMLLLPQAAQAKEVAPQQKLSNVVILATGGTIAGAGASAANSATYTAAKVPVDQLLASVPQLKDIANVRGEQVFQIASESFTNENLLELGKTVAKLADSDDVDGIVITHGTDTLEETAYFLTLVEHTEKPIVVVGSMRPGTAMSADGMLNLYNAVAVAGDKSARGKGVLITMNDEILSGRDASKMVNIKTEAFKSPWGPLGMVVEGKSYWFRAPVKRHTVNSEFDIKQISALAPVEIAYSYGNVSDTAYKALAQAGAKAIIHAGTGNGSVPARVVPTLQELRKQGVQIIRSSHVNAGGFVLRNAEQPDDKNDWIVAHDLNPQKARILAAVAMTKTQDSKELQRIFWEY.

Residues 1 to 25 form the signal peptide; the sequence is MKPLLHAFAPGVMALMLLLPQAAQA. Residues 35 to 362 form the Asparaginase/glutaminase domain; the sequence is SNVVILATGG…KELQRIFWEY (328 aa). Thr-45 functions as the Acyl-ester intermediate in the catalytic mechanism. Substrate is bound by residues Ser-92 and 125–126; that span reads TD.

It belongs to the asparaginase 1 family. As to quaternary structure, homotetramer.

Its subcellular location is the periplasm. It catalyses the reaction L-glutamine + H2O = L-glutamate + NH4(+). The enzyme catalyses L-asparagine + H2O = L-aspartate + NH4(+). The sequence is that of Glutaminase-asparaginase (ansB) from Pseudomonas aeruginosa (strain ATCC 15692 / DSM 22644 / CIP 104116 / JCM 14847 / LMG 12228 / 1C / PRS 101 / PAO1).